The primary structure comprises 342 residues: Phenylalanine--tRNA ligase alpha subunit (342 aa).

Residue glutamate 257 participates in Mg(2+) binding.

Belongs to the class-II aminoacyl-tRNA synthetase family. Phe-tRNA synthetase alpha subunit type 1 subfamily. Tetramer of two alpha and two beta subunits. The cofactor is Mg(2+).

The protein localises to the cytoplasm. The enzyme catalyses tRNA(Phe) + L-phenylalanine + ATP = L-phenylalanyl-tRNA(Phe) + AMP + diphosphate + H(+). The polypeptide is Phenylalanine--tRNA ligase alpha subunit (pheS) (Chlamydia trachomatis serovar D (strain ATCC VR-885 / DSM 19411 / UW-3/Cx)).